Here is an 89-residue protein sequence, read N- to C-terminus: YcgL domain-containing protein Asuc_1390 (89 aa).

One can recognise a YcgL domain in the interval 1–85 (MLCAIYKSKK…KDDWLFTIEK (85 aa)).

The protein is YcgL domain-containing protein Asuc_1390 of Actinobacillus succinogenes (strain ATCC 55618 / DSM 22257 / CCUG 43843 / 130Z).